Here is a 260-residue protein sequence, read N- to C-terminus: Flap endonuclease Xni (260 aa).

Aspartate 104 provides a ligand contact to Mg(2+). One can recognise a 5'-3' exonuclease domain in the interval 160-249; that stretch reads VSPQQLTDYW…LNGNLQQLRL (90 aa). The K(+) site is built by leucine 171, alanine 172, proline 180, valine 182, and isoleucine 185. Positions 184-189 are interaction with DNA; it reads GIGPKS.

It belongs to the Xni family. Mg(2+) is required as a cofactor. It depends on K(+) as a cofactor.

In terms of biological role, has flap endonuclease activity. During DNA replication, flap endonucleases cleave the 5'-overhanging flap structure that is generated by displacement synthesis when DNA polymerase encounters the 5'-end of a downstream Okazaki fragment. The protein is Flap endonuclease Xni of Pectobacterium carotovorum subsp. carotovorum (strain PC1).